A 379-amino-acid polypeptide reads, in one-letter code: Alkanesulfonate monooxygenase (379 aa).

Belongs to the SsuD family.

The catalysed reaction is an alkanesulfonate + FMNH2 + O2 = an aldehyde + FMN + sulfite + H2O + 2 H(+). Its function is as follows. Catalyzes the desulfonation of aliphatic sulfonates. In Pseudomonas syringae pv. syringae (strain B728a), this protein is Alkanesulfonate monooxygenase.